Here is a 430-residue protein sequence, read N- to C-terminus: Histidinol dehydrogenase (430 aa).

Positions 131, 192, and 215 each coordinate NAD(+). Substrate contacts are provided by serine 238, glutamine 260, and histidine 263. Positions 260 and 263 each coordinate Zn(2+). Residues glutamate 328 and histidine 329 each act as proton acceptor in the active site. Histidine 329, aspartate 362, glutamate 416, and histidine 421 together coordinate substrate. Aspartate 362 provides a ligand contact to Zn(2+). Zn(2+) is bound at residue histidine 421.

The protein belongs to the histidinol dehydrogenase family. Zn(2+) is required as a cofactor.

It catalyses the reaction L-histidinol + 2 NAD(+) + H2O = L-histidine + 2 NADH + 3 H(+). The protein operates within amino-acid biosynthesis; L-histidine biosynthesis; L-histidine from 5-phospho-alpha-D-ribose 1-diphosphate: step 9/9. Its function is as follows. Catalyzes the sequential NAD-dependent oxidations of L-histidinol to L-histidinaldehyde and then to L-histidine. This is Histidinol dehydrogenase from Acinetobacter baylyi (strain ATCC 33305 / BD413 / ADP1).